The sequence spans 66 residues: Large ribosomal subunit protein bL35 (66 aa).

Positions 1 to 26 are enriched in basic residues; sequence MPKMKTHRGSAKRFKKTGSGKLKRSH. A disordered region spans residues 1-48; it reads MPKMKTHRGSAKRFKKTGSGKLKRSHAYTSHLFANKSQKQKRKLRKSA.

This sequence belongs to the bacterial ribosomal protein bL35 family.

The sequence is that of Large ribosomal subunit protein bL35 from Bacillus licheniformis (strain ATCC 14580 / DSM 13 / JCM 2505 / CCUG 7422 / NBRC 12200 / NCIMB 9375 / NCTC 10341 / NRRL NRS-1264 / Gibson 46).